The sequence spans 61 residues: Insect toxin BsIT2 (61 aa).

In terms of domain architecture, LCN-type CS-alpha/beta spans 1–61; it reads DGYIKKSKGC…RWKYETKTCK (61 aa). 4 disulfides stabilise this stretch: cysteine 10–cysteine 60, cysteine 14–cysteine 35, cysteine 21–cysteine 42, and cysteine 25–cysteine 44.

Belongs to the long (4 C-C) scorpion toxin superfamily. Sodium channel inhibitor family. Beta subfamily. In terms of tissue distribution, expressed by the venom gland.

It localises to the secreted. Functionally, depressant insect beta-toxins cause a transient contraction paralysis followed by a slow flaccid paralysis. They bind voltage-independently at site-4 of sodium channels (Nav) and shift the voltage of activation toward more negative potentials thereby affecting sodium channel activation and promoting spontaneous and repetitive firing. This toxin is active only on insects. In Hottentotta tamulus sindicus (Scorpion), this protein is Insect toxin BsIT2.